The primary structure comprises 79 residues: TALLLAAHYTADTSLAFASVTHMCRNVQFGWLIRNLHANGASFFFICIYLHIGRGLYYGSYLNKETWNIGVILLLTLMA.

3 helical membrane-spanning segments follow: residues 1 to 7 (TALLLAA), 31 to 52 (WLIR…YLHI), and 67 to 79 (WNIG…TLMA). Heme b-binding residues include histidine 37 and histidine 51.

The protein belongs to the cytochrome b family. In terms of assembly, the cytochrome bc1 complex contains 11 subunits: 3 respiratory subunits (MT-CYB, CYC1 and UQCRFS1), 2 core proteins (UQCRC1 and UQCRC2) and 6 low-molecular weight proteins (UQCRH/QCR6, UQCRB/QCR7, UQCRQ/QCR8, UQCR10/QCR9, UQCR11/QCR10 and a cleavage product of UQCRFS1). This cytochrome bc1 complex then forms a dimer. Heme b is required as a cofactor.

Its subcellular location is the mitochondrion inner membrane. Component of the ubiquinol-cytochrome c reductase complex (complex III or cytochrome b-c1 complex) that is part of the mitochondrial respiratory chain. The b-c1 complex mediates electron transfer from ubiquinol to cytochrome c. Contributes to the generation of a proton gradient across the mitochondrial membrane that is then used for ATP synthesis. The polypeptide is Cytochrome b (MT-CYB) (Pomatostomus superciliosus (White-browed babbler)).